The chain runs to 215 residues: Ribonuclease T (215 aa).

The 175-residue stretch at valine 20–phenylalanine 194 folds into the Exonuclease domain. Positions 23, 25, 181, and 186 each coordinate Mg(2+). Histidine 181 (proton donor/acceptor) is an active-site residue.

This sequence belongs to the RNase T family. As to quaternary structure, homodimer. Mg(2+) is required as a cofactor.

In terms of biological role, trims short 3' overhangs of a variety of RNA species, leaving a one or two nucleotide 3' overhang. Responsible for the end-turnover of tRNA: specifically removes the terminal AMP residue from uncharged tRNA (tRNA-C-C-A). Also appears to be involved in tRNA biosynthesis. The polypeptide is Ribonuclease T (Yersinia pseudotuberculosis serotype I (strain IP32953)).